The sequence spans 157 residues: Small ribosomal subunit protein uS7 (157 aa).

The protein belongs to the universal ribosomal protein uS7 family. As to quaternary structure, part of the 30S ribosomal subunit. Contacts proteins S9 and S11.

One of the primary rRNA binding proteins, it binds directly to 16S rRNA where it nucleates assembly of the head domain of the 30S subunit. Is located at the subunit interface close to the decoding center, probably blocks exit of the E-site tRNA. This chain is Small ribosomal subunit protein uS7, found in Polaromonas naphthalenivorans (strain CJ2).